Reading from the N-terminus, the 245-residue chain is 1-(5-phosphoribosyl)-5-[(5-phosphoribosylamino)methylideneamino] imidazole-4-carboxamide isomerase (245 aa).

Catalysis depends on aspartate 7, which acts as the Proton acceptor. The active-site Proton donor is the aspartate 129.

It belongs to the HisA/HisF family.

It localises to the cytoplasm. It catalyses the reaction 1-(5-phospho-beta-D-ribosyl)-5-[(5-phospho-beta-D-ribosylamino)methylideneamino]imidazole-4-carboxamide = 5-[(5-phospho-1-deoxy-D-ribulos-1-ylimino)methylamino]-1-(5-phospho-beta-D-ribosyl)imidazole-4-carboxamide. Its pathway is amino-acid biosynthesis; L-histidine biosynthesis; L-histidine from 5-phospho-alpha-D-ribose 1-diphosphate: step 4/9. This Tolumonas auensis (strain DSM 9187 / NBRC 110442 / TA 4) protein is 1-(5-phosphoribosyl)-5-[(5-phosphoribosylamino)methylideneamino] imidazole-4-carboxamide isomerase.